Reading from the N-terminus, the 129-residue chain is DNA-directed RNA polymerase III subunit rpc9 (129 aa).

It belongs to the eukaryotic RPC9 RNA polymerase subunit family. In terms of assembly, component of the RNA polymerase III (Pol III) complex.

It is found in the cytoplasm. The protein localises to the nucleus. Functionally, DNA-dependent RNA polymerase catalyzes the transcription of DNA into RNA using the four ribonucleoside triphosphates as substrates. Specific peripheric component of RNA polymerase III which synthesizes small RNAs, such as 5S rRNA and tRNAs. This chain is DNA-directed RNA polymerase III subunit rpc9 (rpc17), found in Schizosaccharomyces pombe (strain 972 / ATCC 24843) (Fission yeast).